The following is a 1734-amino-acid chain: Gag-pol polyprotein (1734 aa).

G2 carries N-myristoyl glycine; by host lipidation. A PTAP/PSAP motif motif is present at residues 109-112 (PTAP). Positions 112–217 (PILPSGPSTQ…STTSRAFPLR (106 aa)) are disordered. Residues 128–132 (LYPAF) carry the LYPX(n)L motif motif. A PPXY motif motif is present at residues 161–164 (PPPY). S191 is subject to Phosphoserine; by host. Residues 344–392 (GRSPTNLAKVKGITQGPNESPSAFLERLKEAYRRYTPYDPEDPGQETNV) are interaction with host PIAS4. The tract at residues 429–434 (IFNKRE) is interaction with host UBE2I. Composition is skewed to basic and acidic residues over residues 433–474 (RETP…REMS) and 485–498 (RQDR…RPQL). Disordered stretches follow at residues 433–498 (RETP…RPQL) and 512–551 (WAKD…EPRI). A CCHC-type zinc finger spans residues 501–518 (DQCAYCKEKGHWAKDCPK). The region spanning 560-630 (VTFLVDTGAQ…CPYPLLGRDL (71 aa)) is the Peptidase A2 domain. Catalysis depends on D565, which acts as the Protease; shared with dimeric partner. One can recognise a Reverse transcriptase domain in the interval 740–931 (LDQGILVPCQ…KQVKYLGYLL (192 aa)). Mg(2+) contacts are provided by D808, D882, D883, D1182, E1220, D1241, and D1311. In terms of domain architecture, RNase H type-1 spans 1173 to 1319 (PDADHTWYTD…ADQAAREAAI (147 aa)). The HHCC-type zinc finger occupies 1386–1426 (HRLTHLGYQKMKALLDRGESPYYMLNRDKTLQYVADSCTVC). The region spanning 1443 to 1601 (RGHRPGTHWE…TPYEILYGAP (159 aa)) is the Integrase catalytic domain. Positions 1454 and 1513 each coordinate Mg(2+).

In terms of assembly, homohexamer; further associates as homomultimer. The virus core is composed of a lattice formed from hexagonal rings, each containing six capsid monomers. Interacts with mouse UBE2I and mouse PIAS4. As to quaternary structure, interacts (via PPXY motif) with host NEDD4. Interacts (via PSAP motif) with host TSG101. Interacts (via LYPX(n)L motif) with host PDCD6IP. The reverse transcriptase is a monomer (Potential). Interacts (via RNase domains) with host release factor ETF1; this interaction is essential for translational readthrough of amber codon between viral gag and pol genes, as well as for viral replication. In terms of assembly, homodimer. Requires Mg(2+) as cofactor. In terms of processing, ubiquitinated by ITCH. Gag can recruit the ubiquitin ligase Itch in an L domain-independent manner to facilitate virus release via a mechanism that involves Gag ubiquitination. Post-translationally, specific enzymatic cleavages by the viral protease yield mature proteins. The protease is released by autocatalytic cleavage. The polyprotein is cleaved during and after budding, this process is termed maturation. Sumoylated; which is required for virus replication. In terms of processing, phosphorylated on serine residues.

The protein localises to the virion. The protein resides in the host cell membrane. Its subcellular location is the host late endosome membrane. It is found in the host endosome. It localises to the host multivesicular body. The protein localises to the host cytoplasm. It carries out the reaction DNA(n) + a 2'-deoxyribonucleoside 5'-triphosphate = DNA(n+1) + diphosphate. The catalysed reaction is Endonucleolytic cleavage to 5'-phosphomonoester.. With respect to regulation, most efficiently inhibited by Amprenavir, which is able to block Gag-Pol processing in infected cells. Its function is as follows. Plays a role in budding and is processed by the viral protease during virion maturation outside the cell. During budding, it recruits, in a PPXY-dependent or independent manner, Nedd4-like ubiquitin ligases that conjugate ubiquitin molecules to Gag-Pol, or to Gag-Pol binding host factors. Interaction with HECT ubiquitin ligases probably links the viral protein to the host ESCRT pathway and facilitates release. In terms of biological role, targets Gag and gag-pol polyproteins to the plasma membrane via a multipartite membrane binding signal, that includes its myristoylated N-terminus. Also mediates nuclear localization of the pre-integration complex. Constituent of the pre-integration complex (PIC) which tethers the latter to mitotic chromosomes. This allows the integration of the viral genome into the host DNA. Functionally, forms the spherical core of the virion that encapsulates the genomic RNA-nucleocapsid complex. Its function is as follows. Involved in the packaging and encapsidation of two copies of the genome. Binds with high affinity to conserved UCUG elements within the packaging signal, located near the 5'-end of the genome. This binding is dependent on genome dimerization. Acts as a nucleic acid chaperone which is involved in rearrangement of nucleic acid secondary structures during gRNA retrotranscription. In terms of biological role, the aspartyl protease mediates proteolytic cleavages of Gag and Gag-Pol polyproteins during or shortly after the release of the virion from the plasma membrane. Cleavages take place as an ordered, step-wise cascade to yield mature proteins. This process is called maturation. Displays maximal activity during the budding process just prior to particle release from the cell (Potential). Cleaves the translation initiation factor eIF4G leading to the inhibition of host cap-dependent translation. RT is a multifunctional enzyme that converts the viral dimeric RNA genome into dsDNA in the cytoplasm, shortly after virus entry into the cell. This enzyme displays a DNA polymerase activity that can copy either DNA or RNA templates, and a ribonuclease H (RNase H) activity that cleaves the RNA strand of RNA-DNA heteroduplexes in a partially processive 3' to 5' endonucleasic mode. Conversion of viral genomic RNA into dsDNA requires many steps. A tRNA binds to the primer-binding site (PBS) situated at the 5' end of the viral RNA. RT uses the 3' end of the tRNA primer to perform a short round of RNA-dependent minus-strand DNA synthesis. The reading proceeds through the U5 region and ends after the repeated (R) region which is present at both ends of viral RNA. The portion of the RNA-DNA heteroduplex is digested by the RNase H, resulting in a ssDNA product attached to the tRNA primer. This ssDNA/tRNA hybridizes with the identical R region situated at the 3' end of viral RNA. This template exchange, known as minus-strand DNA strong stop transfer, can be either intra- or intermolecular. RT uses the 3' end of this newly synthesized short ssDNA to perform the RNA-dependent minus-strand DNA synthesis of the whole template. RNase H digests the RNA template except for a polypurine tract (PPT) situated at the 5' end of the genome. It is not clear if both polymerase and RNase H activities are simultaneous. RNase H probably can proceed both in a polymerase-dependent (RNA cut into small fragments by the same RT performing DNA synthesis) and a polymerase-independent mode (cleavage of remaining RNA fragments by free RTs). Secondly, RT performs DNA-directed plus-strand DNA synthesis using the PPT that has not been removed by RNase H as primers. PPT and tRNA primers are then removed by RNase H. The 3' and 5' ssDNA PBS regions hybridize to form a circular dsDNA intermediate. Strand displacement synthesis by RT to the PBS and PPT ends produces a blunt ended, linear dsDNA copy of the viral genome that includes long terminal repeats (LTRs) at both ends. Functionally, catalyzes viral DNA integration into the host chromosome, by performing a series of DNA cutting and joining reactions. This enzyme activity takes place after virion entry into a cell and reverse transcription of the RNA genome in dsDNA. The first step in the integration process is 3' processing. This step requires a complex comprising the viral genome, matrix protein and integrase. This complex is called the pre-integration complex (PIC). The integrase protein removes 2 nucleotides from each 3' end of the viral DNA, leaving recessed CA OH's at the 3' ends. In the second step that requires cell division, the PIC enters cell nucleus. In the third step, termed strand transfer, the integrase protein joins the previously processed 3' ends to the 5' ends of strands of target cellular DNA at the site of integration. The last step is viral DNA integration into host chromosome. In Mus musculus (Mouse), this protein is Gag-pol polyprotein (gag-pol).